Consider the following 360-residue polypeptide: Uroporphyrinogen decarboxylase (360 aa).

Residues 27–31, Phe46, Asp77, Tyr154, Thr209, and His327 each bind substrate; that span reads RQSGR.

This sequence belongs to the uroporphyrinogen decarboxylase family. As to quaternary structure, homodimer.

The protein resides in the cytoplasm. It carries out the reaction uroporphyrinogen III + 4 H(+) = coproporphyrinogen III + 4 CO2. Its pathway is porphyrin-containing compound metabolism; protoporphyrin-IX biosynthesis; coproporphyrinogen-III from 5-aminolevulinate: step 4/4. Its function is as follows. Catalyzes the decarboxylation of four acetate groups of uroporphyrinogen-III to yield coproporphyrinogen-III. The chain is Uroporphyrinogen decarboxylase from Wigglesworthia glossinidia brevipalpis.